Reading from the N-terminus, the 248-residue chain is 21S rRNA pseudouridine(2819) synthase (248 aa).

Asp-58 is a catalytic residue.

The protein belongs to the pseudouridine synthase RluA family.

It localises to the mitochondrion. It carries out the reaction uridine(2819) in 21S rRNA = pseudouridine(2819) in 21S rRNA. Its function is as follows. Pseudouridylate synthase responsible for the pseudouridine-2819 formation in mitochondrial 21S rRNA. May modulate the efficiency or the fidelity of the mitochondrial translation machinery. This chain is 21S rRNA pseudouridine(2819) synthase (PUS5), found in Candida albicans (strain SC5314 / ATCC MYA-2876) (Yeast).